The chain runs to 463 residues: Glutamate--tRNA ligase 1 (463 aa).

Positions Pro10–Gly20 match the 'HIGH' region motif. The 'KMSKS' region signature appears at Lys238–Arg242. Lys241 contacts ATP.

It belongs to the class-I aminoacyl-tRNA synthetase family. Glutamate--tRNA ligase type 1 subfamily. As to quaternary structure, monomer.

The protein localises to the cytoplasm. It carries out the reaction tRNA(Glu) + L-glutamate + ATP = L-glutamyl-tRNA(Glu) + AMP + diphosphate. Its function is as follows. Catalyzes the attachment of glutamate to tRNA(Glu) in a two-step reaction: glutamate is first activated by ATP to form Glu-AMP and then transferred to the acceptor end of tRNA(Glu). This is Glutamate--tRNA ligase 1 from Helicobacter pylori (strain ATCC 700392 / 26695) (Campylobacter pylori).